The chain runs to 97 residues: Co-chaperonin GroES (97 aa).

This sequence belongs to the GroES chaperonin family. In terms of assembly, heptamer of 7 subunits arranged in a ring. Interacts with the chaperonin GroEL.

It is found in the cytoplasm. Functionally, together with the chaperonin GroEL, plays an essential role in assisting protein folding. The GroEL-GroES system forms a nano-cage that allows encapsulation of the non-native substrate proteins and provides a physical environment optimized to promote and accelerate protein folding. GroES binds to the apical surface of the GroEL ring, thereby capping the opening of the GroEL channel. This chain is Co-chaperonin GroES, found in Pseudomonas entomophila (strain L48).